Consider the following 310-residue polypeptide: Beta sliding clamp (310 aa).

Belongs to the beta sliding clamp family. As to quaternary structure, forms a ring-shaped head-to-tail homodimer around DNA which binds and tethers DNA polymerases and other proteins to the DNA. The DNA replisome complex has a single clamp-loading complex (3 tau and 1 each of delta, delta', psi and chi subunits) which binds 3 Pol III cores (1 core on the leading strand and 2 on the lagging strand) each with a beta sliding clamp dimer. Additional proteins in the replisome are other copies of gamma, psi and chi, Ssb, DNA helicase and RNA primase.

It localises to the cytoplasm. Confers DNA tethering and processivity to DNA polymerases and other proteins. Acts as a clamp, forming a ring around DNA (a reaction catalyzed by the clamp-loading complex) which diffuses in an ATP-independent manner freely and bidirectionally along dsDNA. Initially characterized for its ability to contact the catalytic subunit of DNA polymerase III (Pol III), a complex, multichain enzyme responsible for most of the replicative synthesis in bacteria; Pol III exhibits 3'-5' exonuclease proofreading activity. The beta chain is required for initiation of replication as well as for processivity of DNA replication. In Micrococcus luteus (Micrococcus lysodeikticus), this protein is Beta sliding clamp (dnaN).